We begin with the raw amino-acid sequence, 417 residues long: NADH-quinone oxidoreductase subunit D (417 aa).

The protein belongs to the complex I 49 kDa subunit family. As to quaternary structure, NDH-1 is composed of 14 different subunits. Subunits NuoB, C, D, E, F, and G constitute the peripheral sector of the complex.

The protein localises to the cell inner membrane. It catalyses the reaction a quinone + NADH + 5 H(+)(in) = a quinol + NAD(+) + 4 H(+)(out). In terms of biological role, NDH-1 shuttles electrons from NADH, via FMN and iron-sulfur (Fe-S) centers, to quinones in the respiratory chain. The immediate electron acceptor for the enzyme in this species is believed to be ubiquinone. Couples the redox reaction to proton translocation (for every two electrons transferred, four hydrogen ions are translocated across the cytoplasmic membrane), and thus conserves the redox energy in a proton gradient. This is NADH-quinone oxidoreductase subunit D from Verminephrobacter eiseniae (strain EF01-2).